A 64-amino-acid chain; its full sequence is Potassium channel toxin kappa-KTx 3.4 (64 aa).

The N-terminal stretch at 1–26 (MKSTLMTASLLILVLLSIIDYASVYA) is a signal peptide. Residues 27–36 (EFIDSEISLE) constitute a propeptide that is removed on maturation. Intrachain disulfides connect cysteine 43–cysteine 61 and cysteine 47–cysteine 57.

This sequence belongs to the short scorpion toxin superfamily. Potassium channel inhibitor kappa-KTx family. Kappa-KTx 3 subfamily. As to expression, expressed by the venom gland.

Its subcellular location is the secreted. Its function is as follows. Potassium channel inhibitor (Kv). The sequence is that of Potassium channel toxin kappa-KTx 3.4 from Heterometrus petersii (Asian forest scorpion).